Consider the following 278-residue polypeptide: 4-hydroxy-3-methylbut-2-enyl diphosphate reductase (278 aa).

Cys-12 provides a ligand contact to [4Fe-4S] cluster. Residues His-41 and His-74 each contribute to the (2E)-4-hydroxy-3-methylbut-2-enyl diphosphate site. The dimethylallyl diphosphate site is built by His-41 and His-74. Positions 41 and 74 each coordinate isopentenyl diphosphate. Cys-96 lines the [4Fe-4S] cluster pocket. His-124 serves as a coordination point for (2E)-4-hydroxy-3-methylbut-2-enyl diphosphate. Dimethylallyl diphosphate is bound at residue His-124. Position 124 (His-124) interacts with isopentenyl diphosphate. The Proton donor role is filled by Glu-126. Thr-161 is a binding site for (2E)-4-hydroxy-3-methylbut-2-enyl diphosphate. [4Fe-4S] cluster is bound at residue Cys-189. 3 residues coordinate (2E)-4-hydroxy-3-methylbut-2-enyl diphosphate: Ser-217, Asn-219, and Ser-261. Residues Ser-217, Asn-219, and Ser-261 each coordinate dimethylallyl diphosphate. Positions 217, 219, and 261 each coordinate isopentenyl diphosphate.

Belongs to the IspH family. [4Fe-4S] cluster serves as cofactor.

The enzyme catalyses isopentenyl diphosphate + 2 oxidized [2Fe-2S]-[ferredoxin] + H2O = (2E)-4-hydroxy-3-methylbut-2-enyl diphosphate + 2 reduced [2Fe-2S]-[ferredoxin] + 2 H(+). It catalyses the reaction dimethylallyl diphosphate + 2 oxidized [2Fe-2S]-[ferredoxin] + H2O = (2E)-4-hydroxy-3-methylbut-2-enyl diphosphate + 2 reduced [2Fe-2S]-[ferredoxin] + 2 H(+). The protein operates within isoprenoid biosynthesis; dimethylallyl diphosphate biosynthesis; dimethylallyl diphosphate from (2E)-4-hydroxy-3-methylbutenyl diphosphate: step 1/1. It participates in isoprenoid biosynthesis; isopentenyl diphosphate biosynthesis via DXP pathway; isopentenyl diphosphate from 1-deoxy-D-xylulose 5-phosphate: step 6/6. Its function is as follows. Catalyzes the conversion of 1-hydroxy-2-methyl-2-(E)-butenyl 4-diphosphate (HMBPP) into a mixture of isopentenyl diphosphate (IPP) and dimethylallyl diphosphate (DMAPP). Acts in the terminal step of the DOXP/MEP pathway for isoprenoid precursor biosynthesis. The chain is 4-hydroxy-3-methylbut-2-enyl diphosphate reductase from Anaeromyxobacter sp. (strain K).